A 407-amino-acid chain; its full sequence is 1-deoxy-D-xylulose 5-phosphate reductoisomerase (407 aa).

Positions 10, 11, 12, 13, 36, and 131 each coordinate NADPH. Lysine 132 contacts 1-deoxy-D-xylulose 5-phosphate. Glutamate 133 provides a ligand contact to NADPH. A Mn(2+)-binding site is contributed by aspartate 155. Residues serine 156, glutamate 157, serine 181, and histidine 204 each contribute to the 1-deoxy-D-xylulose 5-phosphate site. Mn(2+) is bound at residue glutamate 157. An NADPH-binding site is contributed by glycine 210. 1-deoxy-D-xylulose 5-phosphate contacts are provided by serine 217, asparagine 222, lysine 223, and glutamate 226. Residue glutamate 226 coordinates Mn(2+).

Belongs to the DXR family. Mg(2+) serves as cofactor. Mn(2+) is required as a cofactor.

The catalysed reaction is 2-C-methyl-D-erythritol 4-phosphate + NADP(+) = 1-deoxy-D-xylulose 5-phosphate + NADPH + H(+). It functions in the pathway isoprenoid biosynthesis; isopentenyl diphosphate biosynthesis via DXP pathway; isopentenyl diphosphate from 1-deoxy-D-xylulose 5-phosphate: step 1/6. Catalyzes the NADPH-dependent rearrangement and reduction of 1-deoxy-D-xylulose-5-phosphate (DXP) to 2-C-methyl-D-erythritol 4-phosphate (MEP). This is 1-deoxy-D-xylulose 5-phosphate reductoisomerase from Cutibacterium acnes (strain DSM 16379 / KPA171202) (Propionibacterium acnes).